The chain runs to 383 residues: Adaptive-response sensory kinase SasA (383 aa).

A Histidine kinase domain is found at 152 to 365; that stretch reads MVAHELRTPL…CFTFTVPIWQ (214 aa). His155 is modified (phosphohistidine; by autocatalysis).

As to quaternary structure, homooligomerizes. Interacts with KaiC. Participates in the KaiABC clock complex, whose core is composed of a KaiC homohexamer, 6 KaiB and up to 6 KaiA dimers. SasA and KaiB(fs) compete to bind to KaiC.

The catalysed reaction is ATP + protein L-histidine = ADP + protein N-phospho-L-histidine.. Member of the two-component regulatory system SasA/RpaA involved in genome-wide circadian gene expression. One of several clock output pathways. Participates in the Kai clock protein complex, the main circadian regulator in cyanobacteria, via its interaction with KaiC. KaiC enhances the autophosphorylation activity of SasA, which then transfers its phosphate group to RpaA to activate it. In addition to its output function, recruits fold-shifted KaiB (KaiB(fs)) to KaiC to cooperatively form the KaiB(6):KaiC(6) complex (independent of SasA kinase activity). Required for robustness of the circadian rhythm of gene expression and is involved in clock output, also required for adaptation to light/dark cycles. This Parasynechococcus marenigrum (strain WH8102) protein is Adaptive-response sensory kinase SasA.